The sequence spans 708 residues: E3 ubiquitin-protein ligase Praja-2 (708 aa).

Residues 1–10 (MSQYTEKEPA) are compositionally biased toward basic and acidic residues. 2 disordered regions span residues 1-30 (MSQY…GYQT) and 53-90 (ERSL…SSLP). An N-acetylserine modification is found at Ser-2. Polar residues predominate over residues 74 to 90 (ENSSGSSPLDQVDSSLP). Position 196 is a phosphoserine (Ser-196). 3 disordered regions span residues 244-342 (GDTE…KQRS), 385-411 (TQRE…DNPF), and 425-495 (DEDS…QTSL). Thr-246 is subject to Phosphothreonine. The segment covering 249 to 276 (VHQNSQEIQRSSQDEMVSTKQQNNTSQE) has biased composition (polar residues). Ser-253, Ser-309, and Ser-323 each carry phosphoserine. The span at 322-332 (ISSSQVDQETG) shows a compositional bias: polar residues. Positions 333 to 342 (FNRHEAKQRS) are enriched in basic and acidic residues. The residue at position 342 (Ser-342) is a Phosphoserine; by PKA. Thr-389 carries the phosphothreonine; by PKA modification. Ser-432 carries the phosphoserine modification. The segment covering 467 to 483 (NEPELQSDSSGPEEENQ) has biased composition (acidic residues). Polar residues predominate over residues 484-493 (ELSLQEGEQT). The tract at residues 531–708 (DGNNNLEDDS…PSNDSIAEAP (178 aa)) is interaction with PRKAR1A, PRKAR2A and PRKAR2B. The mediates interaction with TBC1D31 stretch occupies residues 550–570 (WSLFDGFADGLGVAEAISYVD). The segment at 634 to 675 (CPICCSEYIKDDIATELPCHHFFHKPCVSIWLQKSGTCPVCR) adopts an RING-type; atypical zinc-finger fold. The interval 685–708 (ASAAPSSEPDPDAPPSNDSIAEAP) is disordered. Low complexity predominate over residues 699 to 708 (PSNDSIAEAP).

In terms of assembly, binds ubiquitin-conjugating enzymes (E2s). In vitro, interacts with the ubiquitin-conjugating enzyme, UBE2D2. The phosphorylated form interacts with PRKAR1A, PRKAR2A and PRKAR2B. Binds the catalytic subunits of cAMP-dependent protein kinase. Interacts with MFHAS1. Interacts with TBC1D31; the interaction is direct and recruits PJA2 to centrosomes.

Its subcellular location is the cytoplasm. It localises to the cell membrane. It is found in the endoplasmic reticulum membrane. The protein resides in the golgi apparatus membrane. The protein localises to the synapse. Its subcellular location is the postsynaptic density. It localises to the cytoskeleton. It is found in the microtubule organizing center. The protein resides in the centrosome. It catalyses the reaction S-ubiquitinyl-[E2 ubiquitin-conjugating enzyme]-L-cysteine + [acceptor protein]-L-lysine = [E2 ubiquitin-conjugating enzyme]-L-cysteine + N(6)-ubiquitinyl-[acceptor protein]-L-lysine.. It participates in protein modification; protein ubiquitination. Functionally, has E2-dependent E3 ubiquitin-protein ligase activity. Responsible for ubiquitination of cAMP-dependent protein kinase type I and type II-alpha/beta regulatory subunits and for targeting them for proteasomal degradation. Essential for PKA-mediated long-term memory processes. Through the ubiquitination of MFHAS1, positively regulates the TLR2 signaling pathway that leads to the activation of the downstream p38 and JNK MAP kinases and promotes the polarization of macrophages toward the pro-inflammatory M1 phenotype. Plays a role in ciliogenesis by ubiquitinating OFD1. This is E3 ubiquitin-protein ligase Praja-2 (PJA2) from Pongo abelii (Sumatran orangutan).